The following is a 367-amino-acid chain: Ferrochelatase (367 aa).

H226 and E307 together coordinate Fe cation.

Belongs to the ferrochelatase family.

The protein resides in the cytoplasm. It carries out the reaction heme b + 2 H(+) = protoporphyrin IX + Fe(2+). Its pathway is porphyrin-containing compound metabolism; protoheme biosynthesis; protoheme from protoporphyrin-IX: step 1/1. Functionally, catalyzes the ferrous insertion into protoporphyrin IX. In Burkholderia pseudomallei (strain 1106a), this protein is Ferrochelatase.